The primary structure comprises 1026 residues: uncharacterized protein (1026 aa).

4 WD repeats span residues 14–53 (LLDE…HFTL), 62–104 (HSVS…RRAT), 148–187 (GHED…LTFK), and 937–977 (NAEC…VKFL).

Its subcellular location is the cytoplasm. The protein resides in the nucleus. This is an uncharacterized protein from Schizosaccharomyces pombe (strain 972 / ATCC 24843) (Fission yeast).